The chain runs to 496 residues: MTPKSAALVDDLVSILKSVQTKRSAKGFLKKLFPQPNEDATPSSTHQAPPVRLAVTKLAGVETIADDTLFGIGKTIQRMSRLGMQSIIVPSMSTPTGLSACFASGKCASLAQVNELREQLRTQELSQLDRVSDILCQAGVLARPSYGTLYASNADGVSLEAQRLLLETLQNGYTSVIGNSVVNPGLCLTQITPDQVVLGVVRSFAQMKSNVSVERLIVIDEVGGMPCPRRSHGSSHVLINLAQEYVSLWPTLSPKHAENLQLVNSCLDLLPHSAAAIVTTPDAAVFNGSTRQSHPIIHNILTDRTVFSCSLPVDRSPETKTTLLRRGTPIYMYHGTDCLTNGSVSWDRIWYLLNDSFQRVFDMPRYLERIRHNLALVIVAGDYEGVAIITLEQPQTPGAAPVPYLDKLAVLQKVQGTSAIADFVFNAMCSVFSQEIVWRSRLDNPVNKWYFERSRGSLLSRSTPWRLFWTGYKSADQKRIQEYLDVIDSIQPTWIK.

An N-acetyltransferase domain is found at 333 to 493 (YHGTDCLTNG…LDVIDSIQPT (161 aa)).

The protein belongs to the acetyltransferase family.

It localises to the mitochondrion. It carries out the reaction L-glutamate + acetyl-CoA = N-acetyl-L-glutamate + CoA + H(+). Its pathway is amino-acid biosynthesis; L-arginine biosynthesis; N(2)-acetyl-L-ornithine from L-glutamate: step 1/4. N-acetylglutamate synthase involved in arginine biosynthesis. The protein is Amino-acid acetyltransferase, mitochondrial (arg2) of Schizosaccharomyces japonicus (strain yFS275 / FY16936) (Fission yeast).